The primary structure comprises 1906 residues: Alpha-2-macroglobulin homolog (1906 aa).

The signal sequence occupies residues 1–21 (MIIRVCIRCFIVLTLVLGIGG). The N-palmitoyl cysteine moiety is linked to residue Cys22. The S-diacylglycerol cysteine moiety is linked to residue Cys22.

Belongs to the protease inhibitor I39 (alpha-2-macroglobulin) family. Bacterial alpha-2-macroglobulin subfamily.

It localises to the cell membrane. This Nostoc sp. (strain PCC 7120 / SAG 25.82 / UTEX 2576) protein is Alpha-2-macroglobulin homolog.